The chain runs to 299 residues: Tetrahydromethanopterin S-methyltransferase subunit E (299 aa).

A run of 6 helical transmembrane segments spans residues 57 to 79 (AISGEPVSYGLYVAVAGTIAWAL), 95 to 115 (GVAAVVHGAYSVSAFLGRTVG), 133 to 153 (IGPIVGHGFIAVFTMTLAAYL), 158 to 178 (LGNPFPLPLVALIFGITVGAI), 237 to 257 (GLCFGLIIFLDGWRSILGNII), and 262 to 282 (VTKTSIALLVGLLVVAVAAGI).

It belongs to the MtrE family. The complex is composed of 8 subunits; MtrA, MtrB, MtrC, MtrD, MtrE, MtrF, MtrG and MtrH.

It localises to the cell membrane. The catalysed reaction is 5-methyl-5,6,7,8-tetrahydromethanopterin + coenzyme M + 2 Na(+)(in) = 5,6,7,8-tetrahydromethanopterin + methyl-coenzyme M + 2 Na(+)(out). Its pathway is one-carbon metabolism; methanogenesis from CO(2); methyl-coenzyme M from 5,10-methylene-5,6,7,8-tetrahydromethanopterin: step 2/2. Part of a complex that catalyzes the formation of methyl-coenzyme M and tetrahydromethanopterin from coenzyme M and methyl-tetrahydromethanopterin. This is an energy-conserving, sodium-ion translocating step. In Methanococcus maripaludis (strain C5 / ATCC BAA-1333), this protein is Tetrahydromethanopterin S-methyltransferase subunit E.